The following is a 381-amino-acid chain: 8-amino-7-oxononanoate synthase (381 aa).

Position 27 (Arg27) interacts with substrate. Pyridoxal 5'-phosphate is bound at residue 105-106 (GY). Substrate is bound at residue His130. Residues Ser176, 201-204 (DEAH), and 232-235 (TLSK) each bind pyridoxal 5'-phosphate. Lys235 bears the N6-(pyridoxal phosphate)lysine mark. A substrate-binding site is contributed by Thr345.

The protein belongs to the class-II pyridoxal-phosphate-dependent aminotransferase family. BioF subfamily. In terms of assembly, homodimer. The cofactor is pyridoxal 5'-phosphate.

It carries out the reaction 6-carboxyhexanoyl-[ACP] + L-alanine + H(+) = (8S)-8-amino-7-oxononanoate + holo-[ACP] + CO2. The protein operates within cofactor biosynthesis; biotin biosynthesis. In terms of biological role, catalyzes the decarboxylative condensation of pimeloyl-[acyl-carrier protein] and L-alanine to produce 8-amino-7-oxononanoate (AON), [acyl-carrier protein], and carbon dioxide. The chain is 8-amino-7-oxononanoate synthase from Mycolicibacterium paratuberculosis (strain ATCC BAA-968 / K-10) (Mycobacterium paratuberculosis).